We begin with the raw amino-acid sequence, 323 residues long: Beta-ketoacyl-[acyl-carrier-protein] synthase III (323 aa).

Residues Cys113 and His250 contribute to the active site. The interval 251 to 255 (QANRR) is ACP-binding. Asn280 is an active-site residue.

Belongs to the thiolase-like superfamily. FabH family. In terms of assembly, homodimer.

It is found in the cytoplasm. It catalyses the reaction malonyl-[ACP] + acetyl-CoA + H(+) = 3-oxobutanoyl-[ACP] + CO2 + CoA. It functions in the pathway lipid metabolism; fatty acid biosynthesis. In terms of biological role, catalyzes the condensation reaction of fatty acid synthesis by the addition to an acyl acceptor of two carbons from malonyl-ACP. Catalyzes the first condensation reaction which initiates fatty acid synthesis and may therefore play a role in governing the total rate of fatty acid production. Possesses both acetoacetyl-ACP synthase and acetyl transacylase activities. Its substrate specificity determines the biosynthesis of branched-chain and/or straight-chain of fatty acids. In Sinorhizobium medicae (strain WSM419) (Ensifer medicae), this protein is Beta-ketoacyl-[acyl-carrier-protein] synthase III.